The following is a 455-amino-acid chain: MTNETWVQVREGLLKRVGRNNFVTWIEPLRLMGLDEGVARFEVPTLFFGDWVQRNFADHIRMRLTEAGSPVERLEFAVSNTPRAPLKEVKAAAPAASPARARPAPPEEDLRGAPLDARFTFDSFVVGKPNELAHAAARRVAEGGPVTFNPLFLYGGVGLGKTHLMHAIAHDLQKRQPGARVLYLSAEQFMYRFVQALREREILGFKELFRSVDVLMVDDVQFIAGKDSTQEEFFHTFNALVDQNKQIVISADRAPGEIKDLEERIKSRLQCGLVVDLHPTDYELRLGILQQKADFYREQYRGLVIADGVLEFLAHRITTNVRVLEGALTRLFAFASLVGREITLDLAQDCLADILRASDRKVTIEEIQRKVAEHYNIRLSDMIGPKRLRTIARPRQVAMYLAKQLTPRSLPEIGRRFGGRDHTTIMHGVRKIEELMATDSQLADDLQLLRRLLQA.

A domain I, interacts with DnaA modulators region spans residues 1–70 (MTNETWVQVR…RMRLTEAGSP (70 aa)). Residues 70 to 113 (PVERLEFAVSNTPRAPLKEVKAAAPAASPARARPAPPEEDLRGA) are domain II. Residues 87–109 (KEVKAAAPAASPARARPAPPEED) are disordered. A compositionally biased stretch (low complexity) spans 91 to 102 (AAAPAASPARAR). Residues 114–335 (PLDARFTFDS…GALTRLFAFA (222 aa)) are domain III, AAA+ region. 4 residues coordinate ATP: glycine 158, glycine 160, lysine 161, and threonine 162. The segment at 336-455 (SLVGREITLD…LQLLRRLLQA (120 aa)) is domain IV, binds dsDNA.

The protein belongs to the DnaA family. In terms of assembly, oligomerizes as a right-handed, spiral filament on DNA at oriC.

The protein resides in the cytoplasm. Functionally, plays an essential role in the initiation and regulation of chromosomal replication. ATP-DnaA binds to the origin of replication (oriC) to initiate formation of the DNA replication initiation complex once per cell cycle. Binds the DnaA box (a 9 base pair repeat at the origin) and separates the double-stranded (ds)DNA. Forms a right-handed helical filament on oriC DNA; dsDNA binds to the exterior of the filament while single-stranded (ss)DNA is stabiized in the filament's interior. The ATP-DnaA-oriC complex binds and stabilizes one strand of the AT-rich DNA unwinding element (DUE), permitting loading of DNA polymerase. After initiation quickly degrades to an ADP-DnaA complex that is not apt for DNA replication. Binds acidic phospholipids. The protein is Chromosomal replication initiator protein DnaA of Cereibacter sphaeroides (strain ATCC 17029 / ATH 2.4.9) (Rhodobacter sphaeroides).